The primary structure comprises 576 residues: Proline--tRNA ligase (576 aa).

This sequence belongs to the class-II aminoacyl-tRNA synthetase family. ProS type 1 subfamily. In terms of assembly, homodimer.

The protein resides in the cytoplasm. The catalysed reaction is tRNA(Pro) + L-proline + ATP = L-prolyl-tRNA(Pro) + AMP + diphosphate. Catalyzes the attachment of proline to tRNA(Pro) in a two-step reaction: proline is first activated by ATP to form Pro-AMP and then transferred to the acceptor end of tRNA(Pro). As ProRS can inadvertently accommodate and process non-cognate amino acids such as alanine and cysteine, to avoid such errors it has two additional distinct editing activities against alanine. One activity is designated as 'pretransfer' editing and involves the tRNA(Pro)-independent hydrolysis of activated Ala-AMP. The other activity is designated 'posttransfer' editing and involves deacylation of mischarged Ala-tRNA(Pro). The misacylated Cys-tRNA(Pro) is not edited by ProRS. The chain is Proline--tRNA ligase from Leptospira interrogans serogroup Icterohaemorrhagiae serovar copenhageni (strain Fiocruz L1-130).